A 185-amino-acid chain; its full sequence is Peptidyl-tRNA hydrolase (185 aa).

Tyr14 is a tRNA binding site. The Proton acceptor role is filled by His19. Positions 65, 67, and 113 each coordinate tRNA.

It belongs to the PTH family. As to quaternary structure, monomer.

The protein resides in the cytoplasm. The catalysed reaction is an N-acyl-L-alpha-aminoacyl-tRNA + H2O = an N-acyl-L-amino acid + a tRNA + H(+). In terms of biological role, hydrolyzes ribosome-free peptidyl-tRNAs (with 1 or more amino acids incorporated), which drop off the ribosome during protein synthesis, or as a result of ribosome stalling. Its function is as follows. Catalyzes the release of premature peptidyl moieties from peptidyl-tRNA molecules trapped in stalled 50S ribosomal subunits, and thus maintains levels of free tRNAs and 50S ribosomes. In Rickettsia africae (strain ESF-5), this protein is Peptidyl-tRNA hydrolase.